A 443-amino-acid polypeptide reads, in one-letter code: Xaa-Pro dipeptidase (443 aa).

Residues Asp-246, Asp-257, His-339, Glu-384, and Glu-423 each contribute to the Mn(2+) site.

Belongs to the peptidase M24B family. Bacterial-type prolidase subfamily. Mn(2+) serves as cofactor.

The enzyme catalyses Xaa-L-Pro dipeptide + H2O = an L-alpha-amino acid + L-proline. In terms of biological role, splits dipeptides with a prolyl residue in the C-terminal position. The polypeptide is Xaa-Pro dipeptidase (Edwardsiella ictaluri (strain 93-146)).